The chain runs to 242 residues: Ribose-5-phosphate isomerase A (242 aa).

Substrate-binding positions include 39 to 42 (SGST), 95 to 98 (DGAD), and 108 to 111 (KGGG). Residue E117 is the Proton acceptor of the active site. K135 lines the substrate pocket.

It belongs to the ribose 5-phosphate isomerase family. Homodimer.

The catalysed reaction is aldehydo-D-ribose 5-phosphate = D-ribulose 5-phosphate. It participates in carbohydrate degradation; pentose phosphate pathway; D-ribose 5-phosphate from D-ribulose 5-phosphate (non-oxidative stage): step 1/1. Its function is as follows. Catalyzes the reversible conversion of ribose-5-phosphate to ribulose 5-phosphate. In Chlamydia trachomatis serovar A (strain ATCC VR-571B / DSM 19440 / HAR-13), this protein is Ribose-5-phosphate isomerase A.